A 484-amino-acid chain; its full sequence is Replication factor C large subunit (484 aa).

46-53 lines the ATP pocket; sequence GPPGSGKT. Positions 463–478 are enriched in basic and acidic residues; sequence NADTKEKEKKDPKKQA. Residues 463-484 form a disordered region; sequence NADTKEKEKKDPKKQATLDSFF.

It belongs to the activator 1 small subunits family. RfcL subfamily. Heteromultimer composed of small subunits (RfcS) and large subunits (RfcL).

Its function is as follows. Part of the RFC clamp loader complex which loads the PCNA sliding clamp onto DNA. In Methanococcus maripaludis (strain C6 / ATCC BAA-1332), this protein is Replication factor C large subunit.